The primary structure comprises 263 residues: Phosphatidylglycerol--prolipoprotein diacylglyceryl transferase (263 aa).

A run of 4 helical transmembrane segments spans residues 15 to 35 (ISIH…VYLA), 52 to 72 (FILL…VIFQ), 83 to 103 (IFAI…GAAV), and 112 to 132 (AIAV…AQSI). A 1,2-diacyl-sn-glycero-3-phospho-(1'-sn-glycerol) is bound at residue Arg-134. Transmembrane regions (helical) follow at residues 170–190 (VPTF…ILGL), 200–220 (GDVT…IEGM), and 227–247 (FVGL…GAVL).

This sequence belongs to the Lgt family.

The protein resides in the cell membrane. The catalysed reaction is L-cysteinyl-[prolipoprotein] + a 1,2-diacyl-sn-glycero-3-phospho-(1'-sn-glycerol) = an S-1,2-diacyl-sn-glyceryl-L-cysteinyl-[prolipoprotein] + sn-glycerol 1-phosphate + H(+). It participates in protein modification; lipoprotein biosynthesis (diacylglyceryl transfer). In terms of biological role, catalyzes the transfer of the diacylglyceryl group from phosphatidylglycerol to the sulfhydryl group of the N-terminal cysteine of a prolipoprotein, the first step in the formation of mature lipoproteins. The protein is Phosphatidylglycerol--prolipoprotein diacylglyceryl transferase of Streptococcus thermophilus (strain CNRZ 1066).